The sequence spans 467 residues: MEKLAALKKLPSILRPLLTSKSSYHRVPSDRPTIMDAATSEQLHGLTNRLLTEVNALVSSYSSIDCQHPFLAAACESQNDGSEARSNILSSLSEIEAIVRGPKEFLENIAIQCEMLGSIQWLGEFQILACIPLSQEVPIQDVANLSNVPEQQLAQMIGLTARCGFLIEPRRGYVAHTPLSASFVTNPSHLDAAMFLAEQAAPAALKSATATQRFTESHTNNETAFSLATTTKVPFEAAQEQSPRLSRQWAAYLHHAGGLPEDHVLADAMAKLHWSNISKAGGQVVEVGAFLAAKPLARLFPQLRFLVQLPAGASSCESILCDPSDPIKPGQISIANRVPGSPQSVTNAAVYVLHLPSSVPSQILTELQVHLPALRMSNGVMLIMSGRVLPGQDEPIRARHAAVAHARGLIMYQMSNEVEMDLSSLLQMLDTVRDSTGKLVLVHKLRSCSGMTVAVVVKYQLMAGGAS.

Residues 109–179 (IAIQCEMLGS…RRGYVAHTPL (71 aa)) form the HTH iclR-type domain. Residues 139 to 158 (IQDVANLSNVPEQQLAQMIG) constitute a DNA-binding region (H-T-H motif).

Its subcellular location is the nucleus. Functionally, transcriptional coactivator; part of the gene cluster responsible for the typical purple-black color of the ergot sclerotia. The ergochrome gene cluster produces several ergot pigments including the yellow ergochrome secalonic acid and its derivatives, as well as the red anthraquinones endocrocin and clavorubin. With CPUR_05433, coregulates the production of geodin. In Claviceps purpurea (strain 20.1) (Ergot fungus), this protein is Ergochrome gene cluster transcriptional coactivator CPUR_05432.